Consider the following 90-residue polypeptide: Small ribosomal subunit protein uS15 (90 aa).

This sequence belongs to the universal ribosomal protein uS15 family. In terms of assembly, part of the 30S ribosomal subunit. Forms a bridge to the 50S subunit in the 70S ribosome, contacting the 23S rRNA.

Its function is as follows. One of the primary rRNA binding proteins, it binds directly to 16S rRNA where it helps nucleate assembly of the platform of the 30S subunit by binding and bridging several RNA helices of the 16S rRNA. Forms an intersubunit bridge (bridge B4) with the 23S rRNA of the 50S subunit in the ribosome. In Wolbachia sp. subsp. Brugia malayi (strain TRS), this protein is Small ribosomal subunit protein uS15.